Consider the following 251-residue polypeptide: Coproheme decarboxylase (251 aa).

Fe-coproporphyrin III is bound by residues Arg-133, 147–151, His-174, Gln-187, and Ser-225; that span reads YPMSK. Tyr-147 is an active-site residue.

It belongs to the ChdC family. Type 1 subfamily. Requires Fe-coproporphyrin III as cofactor.

The catalysed reaction is Fe-coproporphyrin III + 2 H2O2 + 2 H(+) = heme b + 2 CO2 + 4 H2O. The enzyme catalyses Fe-coproporphyrin III + H2O2 + H(+) = harderoheme III + CO2 + 2 H2O. It catalyses the reaction harderoheme III + H2O2 + H(+) = heme b + CO2 + 2 H2O. It functions in the pathway porphyrin-containing compound metabolism; protoheme biosynthesis. In terms of biological role, involved in coproporphyrin-dependent heme b biosynthesis. Catalyzes the decarboxylation of Fe-coproporphyrin III (coproheme) to heme b (protoheme IX), the last step of the pathway. The reaction occurs in a stepwise manner with a three-propionate intermediate. The polypeptide is Coproheme decarboxylase (Listeria monocytogenes serotype 4b (strain CLIP80459)).